The following is a 565-amino-acid chain: Periplasmic trehalase (565 aa).

An N-terminal signal peptide occupies residues 1–30; that stretch reads MKSPAPSRPQKMALIPACIFLCFAALSVQA. Residues R152, 159-160, N196, 205-207, 277-279, and G310 contribute to the substrate site; these read WD, RSQ, and RPE. Residues D312 and E496 each act as proton donor/acceptor in the active site. Residue E511 participates in substrate binding. The interval 539–565 is disordered; sequence CDNVPATRPLSESTTQPLKQKEAEPTP.

It belongs to the glycosyl hydrolase 37 family. In terms of assembly, monomer.

The protein resides in the periplasm. The catalysed reaction is alpha,alpha-trehalose + H2O = alpha-D-glucose + beta-D-glucose. Provides the cells with the ability to utilize trehalose at high osmolarity by splitting it into glucose molecules that can subsequently be taken up by the phosphotransferase-mediated uptake system. This is Periplasmic trehalase from Escherichia coli O1:K1 / APEC.